The primary structure comprises 1123 residues: Polyprotein of EF-Ts, chloroplastic (1123 aa).

The N-terminal 73 residues, 1-73, are a transit peptide targeting the chloroplast; it reads MTPVVHCSVG…SSARRPRTLS (73 aa). Residues 68–141 form a disordered region; that stretch reads RPRTLSAATV…MPPLNDEDLV (74 aa). Positions 94 to 103 are enriched in acidic residues; the sequence is TSEESSEDTA. The span at 106 to 119 shows a compositional bias: low complexity; that stretch reads TAEASEQAEASTSS. The S1 motif 1 domain maps to 143–212; sequence GASFTGKVRS…ETGRISLTMR (70 aa). A disordered region spans residues 213 to 258; sequence TGGDYVKPKTETPKAASGGRNTTATTSRGSPRQTRERDEAKSMGET. Positions 231-244 are enriched in polar residues; it reads GRNTTATTSRGSPR. Positions 245–254 are enriched in basic and acidic residues; it reads QTRERDEAKS. The S1 motif 2 domain maps to 263 to 331; the sequence is GQFLDGVVKN…VRGQVTLTMK (69 aa). Disordered regions lie at residues 443–670 and 894–923; these read KTES…SEKT and VAAQ…EEKK. The segment covering 486-501 has biased composition (polar residues); it reads EGSVTTEPTEAASTEF. Low complexity predominate over residues 551 to 587; sequence SVASTESVTAVVEESAPVSSVAIEVPAPEASEASAQE. Residues 630-639 show a composition bias toward acidic residues; the sequence is KPDEPEESLI. Low complexity-rich tracts occupy residues 657-670 and 894-903; these read AAVP…SEKT and VAAQTAAKAP. Residues 908–923 show a composition bias toward basic and acidic residues; it reads PKDDKPEETAETEEKK.

It belongs to the EF-Ts family. In terms of assembly, component of the chloroplast ribosome 30S and 70S subunits, as well as polysomes. Component of the chloroplast ribosome 70S subunit, and at low levels, present in polysomes. As to quaternary structure, associates transiently with chloroplast polysomes.

It localises to the plastid. The protein resides in the chloroplast. In terms of biological role, associates with the EF-Tu.GDP complex and induces the exchange of GDP to GTP. It remains bound to the aminoacyl-tRNA.EF-Tu.GTP complex up to the GTP hydrolysis stage on the ribosome. Functionally, binds to psbD and psbA 5'-untranslated regions (UTRs) in vitro. This chain is Polyprotein of EF-Ts, chloroplastic, found in Oryza sativa subsp. indica (Rice).